A 464-amino-acid polypeptide reads, in one-letter code: ATP synthase subunit beta (464 aa).

154–161 is an ATP binding site; the sequence is GGAGVGKT.

It belongs to the ATPase alpha/beta chains family. F-type ATPases have 2 components, CF(1) - the catalytic core - and CF(0) - the membrane proton channel. CF(1) has five subunits: alpha(3), beta(3), gamma(1), delta(1), epsilon(1). CF(0) has three main subunits: a(1), b(2) and c(9-12). The alpha and beta chains form an alternating ring which encloses part of the gamma chain. CF(1) is attached to CF(0) by a central stalk formed by the gamma and epsilon chains, while a peripheral stalk is formed by the delta and b chains.

It is found in the cell inner membrane. It carries out the reaction ATP + H2O + 4 H(+)(in) = ADP + phosphate + 5 H(+)(out). Produces ATP from ADP in the presence of a proton gradient across the membrane. The catalytic sites are hosted primarily by the beta subunits. The sequence is that of ATP synthase subunit beta from Blochmanniella floridana.